Here is a 365-residue protein sequence, read N- to C-terminus: Sulfate/thiosulfate import ATP-binding protein CysA (365 aa).

In terms of domain architecture, ABC transporter spans 3–237 (IEIANIKKSF…PATRFVLEFM (235 aa)). Residue 35–42 (GPSGSGKT) coordinates ATP.

This sequence belongs to the ABC transporter superfamily. Sulfate/tungstate importer (TC 3.A.1.6) family. The complex is composed of two ATP-binding proteins (CysA), two transmembrane proteins (CysT and CysW) and a solute-binding protein (CysP).

The protein localises to the cell inner membrane. The enzyme catalyses sulfate(out) + ATP + H2O = sulfate(in) + ADP + phosphate + H(+). The catalysed reaction is thiosulfate(out) + ATP + H2O = thiosulfate(in) + ADP + phosphate + H(+). In terms of biological role, part of the ABC transporter complex CysAWTP involved in sulfate/thiosulfate import. Responsible for energy coupling to the transport system. This is Sulfate/thiosulfate import ATP-binding protein CysA from Escherichia coli O157:H7.